Here is a 325-residue protein sequence, read N- to C-terminus: Cell wall mannoprotein PIR3 (325 aa).

The signal sequence occupies residues 1 to 18 (MQYKKPLVVSALAATSLA). A propeptide spanning residues 19-67 (AYAPKDPWSTLTPSATYKGGITDYSSSFGIAIEAVATSASSVASSKAKR) is cleaved from the precursor. PIR1/2/3 repeat units follow at residues 68–91 (AASQ…KKST), 92–109 (AAAV…AKST), 110–127 (AAAV…AKST), 128–145 (AAAV…AKST), 146–163 (AAAV…AKST), 164–181 (AAAA…TTST), 182–199 (KAAA…SKTT), and 200–217 (SGAS…AEVK).

This sequence belongs to the PIR protein family. In terms of processing, covalently linked to beta-1,3-glucan of the inner cell wall layer via an alkali-sensitive ester linkage between the gamma-carboxyl group of glutamic acids, arising from specific glutamines within the PIR1/2/3 repeats, and hydroxyl groups of glucoses of beta-1,3-glucan chains. O-glycosylated. Extensively O-mannosylated.

It is found in the secreted. Its subcellular location is the cell wall. Its function is as follows. Component of the outer cell wall layer. Required for stability of the cell wall and for optimal growth. Required for resistance against several antifungal and cell wall-perturbing agents. This chain is Cell wall mannoprotein PIR3 (PIR3), found in Saccharomyces cerevisiae (strain ATCC 204508 / S288c) (Baker's yeast).